The primary structure comprises 313 residues: MKLERLLAMVVLLISKKQVQAAELAELFEVSVRTIYRDIETINRAGIPIVTSQGSGGGIGIMETYRLEREWLKEEELFAIASALQSVSSMYEPVSHSTAYQKIKHLIPEQSTQAFKHQTEKWFIDMTAWGHTEDQKTLREKISAAIDRLLTISFTYTSASGETLLRETEPYTLVCKAGHWYLYAYCLVRNDFRFFKLNRMKDLAILHQTFIRKDIQLDTLPWDKSWYQKDRLTELVILVQPSARQRIGEWFGYDVLHCCEEDEICQAVISLPEDQWLIGFLLQFGKDIEVLQPLHIRDKVKETIHHMQKIYET.

In terms of domain architecture, HTH deoR-type spans 2–57 (KLERLLAMVVLLISKKQVQAAELAELFEVSVRTIYRDIETINRAGIPIVTSQGSGG). The segment at residues 19–38 (VQAAELAELFEVSVRTIYRD) is a DNA-binding region (H-T-H motif). The WYL domain maps to 131–210 (HTEDQKTLRE…KDLAILHQTF (80 aa)).

It is found in the cytoplasm. This is an uncharacterized protein from Bacillus subtilis (strain 168).